We begin with the raw amino-acid sequence, 480 residues long: Docking protein 1 (480 aa).

An N-acetylmethionine modification is found at Met-1. Positions 3–119 (GALMEGPLFL…WVQILCRTAF (117 aa)) constitute a PH domain. The residue at position 48 (Ser-48) is a Phosphoserine. The region spanning 151-259 (EGSQFWVTSQ…QQQKAQGKVG (109 aa)) is the IRS-type PTB domain. The segment covering 253-262 (KAQGKVGQGQ) has biased composition (low complexity). The tract at residues 253-328 (KAQGKVGQGQ…GSTPAGAGEG (76 aa)) is disordered. The segment covering 265-276 (TRTDSHDGETEG) has biased composition (basic and acidic residues). 2 positions are modified to phosphoserine: Ser-269 and Ser-290. Tyr-295, Tyr-336, and Tyr-340 each carry phosphotyrosine. Tyr-361 is subject to Phosphotyrosine; by INSR. At Tyr-376 the chain carries Phosphotyrosine. Tyr-397 carries the post-translational modification Phosphotyrosine; by INSR. The segment at 398-480 (ELPYNPATDD…RVGVKSEGST (83 aa)) is disordered. A Phosphotyrosine modification is found at Tyr-408. Residues 410–423 (VPPPRSSKPTPAPK) show a composition bias toward pro residues. Ser-415 is modified (phosphoserine). Positions 432-445 (SGTTAGSGSKGSDT) are enriched in low complexity. Polar residues predominate over residues 446–455 (ALYSQVQKSG). A Phosphotyrosine modification is found at Tyr-448.

It belongs to the DOK family. Type A subfamily. In terms of assembly, interacts with RasGAP and INPP5D/SHIP1. Interacts directly with phosphorylated ITGB3. Interacts with SRMS (via the SH2 and SH3 domains). In terms of processing, constitutively tyrosine-phosphorylated. Phosphorylated by TEC. Phosphorylated by LYN. Phosphorylated on tyrosine residues by the insulin receptor kinase. Results in the negative regulation of the insulin signaling pathway. Phosphorylated on tyrosine residues by SRMS.

It is found in the cytoplasm. The protein resides in the nucleus. DOK proteins are enzymatically inert adaptor or scaffolding proteins. They provide a docking platform for the assembly of multimolecular signaling complexes. DOK1 appears to be a negative regulator of the insulin signaling pathway. Modulates integrin activation by competing with talin for the same binding site on ITGB3. In Rattus norvegicus (Rat), this protein is Docking protein 1 (Dok1).